Reading from the N-terminus, the 356-residue chain is Kelch domain-containing protein VC_1773 (356 aa).

Kelch repeat units follow at residues 72-125, 163-210, 288-331, and 333-355; these read KLYV…SLSP, TIFM…HKNN, NLYA…ASNG, and AMYVLGGENSNGDAMTRCLSLLM.

The sequence is that of Kelch domain-containing protein VC_1773 from Vibrio cholerae serotype O1 (strain ATCC 39315 / El Tor Inaba N16961).